Consider the following 691-residue polypeptide: Methionine--tRNA ligase (691 aa).

The 'HIGH' region signature appears at 15–25 (PYTNGPIHIGH). 4 residues coordinate Zn(2+): cysteine 147, cysteine 150, cysteine 160, and cysteine 163. The 'KMSKS' region signature appears at 336-340 (KLSTS). ATP is bound at residue threonine 339. Positions 589–691 (DFTKMDLRVG…DGVKAGTTIN (103 aa)) constitute a tRNA-binding domain.

It belongs to the class-I aminoacyl-tRNA synthetase family. MetG type 1 subfamily. Homodimer. It depends on Zn(2+) as a cofactor.

The protein localises to the cytoplasm. The catalysed reaction is tRNA(Met) + L-methionine + ATP = L-methionyl-tRNA(Met) + AMP + diphosphate. In terms of biological role, is required not only for elongation of protein synthesis but also for the initiation of all mRNA translation through initiator tRNA(fMet) aminoacylation. The protein is Methionine--tRNA ligase of Christiangramia forsetii (strain DSM 17595 / CGMCC 1.15422 / KT0803) (Gramella forsetii).